Consider the following 156-residue polypeptide: UPF0178 protein Jann_2168 (156 aa).

This sequence belongs to the UPF0178 family.

The protein is UPF0178 protein Jann_2168 of Jannaschia sp. (strain CCS1).